A 204-amino-acid chain; its full sequence is Small ribosomal subunit protein uS4 (204 aa).

A disordered region spans residues 1 to 46 (MSKRHSSKYKIDRRMGENIWGRPKSPVNRREYGPGQHGQRRRSKIS). Residues 94-157 (RRLDMIVYRA…QEMALVLEAQ (64 aa)) form the S4 RNA-binding domain.

This sequence belongs to the universal ribosomal protein uS4 family. As to quaternary structure, part of the 30S ribosomal subunit. Contacts protein S5. The interaction surface between S4 and S5 is involved in control of translational fidelity.

Its function is as follows. One of the primary rRNA binding proteins, it binds directly to 16S rRNA where it nucleates assembly of the body of the 30S subunit. With S5 and S12 plays an important role in translational accuracy. This chain is Small ribosomal subunit protein uS4, found in Zymomonas mobilis subsp. mobilis (strain ATCC 31821 / ZM4 / CP4).